Here is a 355-residue protein sequence, read N- to C-terminus: tRNA uridine(34) hydroxylase (355 aa).

The 95-residue stretch at Asp146–Leu240 folds into the Rhodanese domain. Catalysis depends on Cys200, which acts as the Cysteine persulfide intermediate.

Belongs to the TrhO family.

It catalyses the reaction uridine(34) in tRNA + AH2 + O2 = 5-hydroxyuridine(34) in tRNA + A + H2O. In terms of biological role, catalyzes oxygen-dependent 5-hydroxyuridine (ho5U) modification at position 34 in tRNAs. This Pectobacterium carotovorum subsp. carotovorum (strain PC1) protein is tRNA uridine(34) hydroxylase.